Reading from the N-terminus, the 351-residue chain is Protein MGF 360-2L (351 aa).

The protein belongs to the asfivirus MGF 360 family.

Its function is as follows. Plays a role in virus cell tropism, and may be required for efficient virus replication in macrophages. In African swine fever virus (isolate Tick/South Africa/Pretoriuskop Pr4/1996) (ASFV), this protein is Protein MGF 360-2L.